A 69-amino-acid chain; its full sequence is DNA-directed RNA polymerase subunit epsilon (69 aa).

It belongs to the RNA polymerase subunit epsilon family. RNAP is composed of a core of 2 alpha, a beta and a beta' subunit. The core is associated with a delta subunit, and at least one of epsilon or omega. When a sigma factor is associated with the core the holoenzyme is formed, which can initiate transcription.

It carries out the reaction RNA(n) + a ribonucleoside 5'-triphosphate = RNA(n+1) + diphosphate. A non-essential component of RNA polymerase (RNAP). This chain is DNA-directed RNA polymerase subunit epsilon, found in Listeria welshimeri serovar 6b (strain ATCC 35897 / DSM 20650 / CCUG 15529 / CIP 8149 / NCTC 11857 / SLCC 5334 / V8).